We begin with the raw amino-acid sequence, 292 residues long: Ribosomal RNA small subunit methyltransferase I (292 aa).

The protein belongs to the methyltransferase superfamily. RsmI family.

The protein localises to the cytoplasm. The catalysed reaction is cytidine(1402) in 16S rRNA + S-adenosyl-L-methionine = 2'-O-methylcytidine(1402) in 16S rRNA + S-adenosyl-L-homocysteine + H(+). Its function is as follows. Catalyzes the 2'-O-methylation of the ribose of cytidine 1402 (C1402) in 16S rRNA. This chain is Ribosomal RNA small subunit methyltransferase I, found in Buchnera aphidicola subsp. Baizongia pistaciae (strain Bp).